Reading from the N-terminus, the 571-residue chain is Proline--tRNA ligase (571 aa).

The protein belongs to the class-II aminoacyl-tRNA synthetase family. ProS type 1 subfamily. As to quaternary structure, homodimer.

The protein resides in the cytoplasm. It carries out the reaction tRNA(Pro) + L-proline + ATP = L-prolyl-tRNA(Pro) + AMP + diphosphate. In terms of biological role, catalyzes the attachment of proline to tRNA(Pro) in a two-step reaction: proline is first activated by ATP to form Pro-AMP and then transferred to the acceptor end of tRNA(Pro). As ProRS can inadvertently accommodate and process non-cognate amino acids such as alanine and cysteine, to avoid such errors it has two additional distinct editing activities against alanine. One activity is designated as 'pretransfer' editing and involves the tRNA(Pro)-independent hydrolysis of activated Ala-AMP. The other activity is designated 'posttransfer' editing and involves deacylation of mischarged Ala-tRNA(Pro). The misacylated Cys-tRNA(Pro) is not edited by ProRS. The sequence is that of Proline--tRNA ligase from Vibrio campbellii (strain ATCC BAA-1116).